The sequence spans 93 residues: Parbolysin P5 (93 aa).

Intrachain disulfides connect Cys-16–Cys-37, Cys-22–Cys-33, and Cys-47–Cys-60.

This sequence belongs to the worm cytolysin family. In terms of tissue distribution, localized within the skin and proboscis and are most readily isolated from body mucus secretions.

The protein resides in the secreted. Cytolysin that shows hemolytic activity (on bovine erythrocytes, HC(50)=5.75 mg/ml). This hemolytic activity is completely inhibited by small unilamelar vesicles composed of PC/PG, PC/PI and PC/PS in 1:1 molar ratios (with at least 100 mg/ml concentration). This chain is Parbolysin P5, found in Parborlasia corrugatus (Antarctic nemertean worm).